The following is a 327-amino-acid chain: Meiotic coiled-coil protein 6 (327 aa).

The stretch at 66–188 (DAFERDSTQR…TETKEMNKIK (123 aa)) forms a coiled coil. A compositionally biased stretch (basic and acidic residues) spans 175–199 (RRMETETKEMNKIKPKNDSESDRFK). Residues 175–234 (RRMETETKEMNKIKPKNDSESDRFKRNSQSLSQQSPLLDVHSPDNSNHRTMLNINNSSPI) are disordered. Residues 202-212 (SQSLSQQSPLL) show a composition bias toward low complexity. Polar residues predominate over residues 217–232 (PDNSNHRTMLNINNSS). Residues 243-297 (NEVKNRISRLQKTFADLENQHHSFQQICQTLRKRLENDSSTTKQRLSKLEEIIRN) are a coiled coil.

In terms of assembly, interacts with alp4, kms1 and mbo1.

It is found in the nucleus. The protein resides in the cytoplasm. It localises to the cytoskeleton. Its subcellular location is the microtubule organizing center. The protein localises to the spindle pole body. Has a role in meiotic nuclear oscillation and recombination. Required to remodel astral microtubules into the 'horsetail' astral array maintaining the 'horsetail' nuclear movement. Promotes homologous paring of chromosomes during this movement. The protein is Meiotic coiled-coil protein 6 (mcp6) of Schizosaccharomyces pombe (strain 972 / ATCC 24843) (Fission yeast).